The primary structure comprises 471 residues: Glutamate--tRNA ligase (471 aa).

The 'HIGH' region signature appears at 9–19 (PSPTGYLHVGG). A 'KMSKS' region motif is present at residues 237–241 (KLSKR). Position 240 (K240) interacts with ATP.

This sequence belongs to the class-I aminoacyl-tRNA synthetase family. Glutamate--tRNA ligase type 1 subfamily. Monomer.

Its subcellular location is the cytoplasm. The catalysed reaction is tRNA(Glu) + L-glutamate + ATP = L-glutamyl-tRNA(Glu) + AMP + diphosphate. In terms of biological role, catalyzes the attachment of glutamate to tRNA(Glu) in a two-step reaction: glutamate is first activated by ATP to form Glu-AMP and then transferred to the acceptor end of tRNA(Glu). The protein is Glutamate--tRNA ligase of Pectobacterium atrosepticum (strain SCRI 1043 / ATCC BAA-672) (Erwinia carotovora subsp. atroseptica).